The sequence spans 717 residues: Putative amino acid transporter AAT1 (717 aa).

Positions 1–10 (MREGAFDASR) are enriched in basic and acidic residues. A disordered region spans residues 1–88 (MREGAFDASR…DRAQTDSRQE (88 aa)). The span at 16–25 (QRPSSLSTAQ) shows a compositional bias: polar residues. Positions 26–53 (PPSDSRPPSSSSPPSSSSSSSSASSSSP) are enriched in low complexity. The segment covering 74–88 (SAEKMDRAQTDSRQE) has biased composition (basic and acidic residues). The next 8 membrane-spanning stretches (helical) occupy residues 124–143 (VLTL…PYAM), 149–170 (LIGL…YILM), 196–216 (AVDA…LVFL), 236–253 (HRAA…PLSV), 265–283 (FFPV…YRSL), 303–320 (FKSF…INVC), 341–358 (AALL…LGYL), and 378–402 (LMHV…IPTV). A disordered region spans residues 462–602 (GDAEYGGAEA…REEREEREGQ (141 aa)). Over residues 463 to 477 (DAEYGGAEAGEATRG) the composition is skewed to low complexity. The span at 497 to 519 (ARNRDRSRLHADSERSAGDREGS) shows a compositional bias: basic and acidic residues. Residues 547–558 (GSSSASSRSVDS) show a composition bias toward low complexity. The span at 584-602 (SGDREAREEREEREEREGQ) shows a compositional bias: basic and acidic residues. 3 helical membrane-spanning segments follow: residues 622–638 (VCVA…ALVL), 644–669 (VVGL…YAGI), and 681–702 (LLMV…IIIL).

The protein belongs to the amino acid/polyamine transporter 2 family.

The protein localises to the vacuole membrane. Putative amino acid transporter. Probably transports arginine. Involved in maintaining the osmotic homeostasis of the digestive vacuole. Required for extracellular parasite survival and bradyzoite differentiation. The protein is Putative amino acid transporter AAT1 of Toxoplasma gondii (strain ATCC 50611 / Me49).